The chain runs to 612 residues: Peroxisomal carnitine O-octanoyltransferase (612 aa).

M1 bears the N-acetylmethionine mark. N6-succinyllysine is present on residues K40 and K57. The active-site Proton acceptor is the H327. CoA-binding positions include K406 and 410 to 417; that span reads KKEALHPD. Residue K406 is modified to N6-acetyllysine; alternate. K406 bears the N6-succinyllysine; alternate mark. 3 residues coordinate (R)-carnitine: Y439, T441, and T452. The Microbody targeting signal signature appears at 610 to 612; it reads AHL.

Belongs to the carnitine/choline acetyltransferase family. As to expression, liver.

Its subcellular location is the peroxisome. The enzyme catalyses octanoyl-CoA + (R)-carnitine = O-octanoyl-(R)-carnitine + CoA. The catalysed reaction is 4,8-dimethylnonanoyl-CoA + (R)-carnitine = O-4,8-dimethylnonanoyl-(R)-carnitine + CoA. It participates in lipid metabolism; fatty acid beta-oxidation. Functionally, beta-oxidation of fatty acids. The highest activity concerns the C6 to C10 chain length substrate. This is Peroxisomal carnitine O-octanoyltransferase (Crot) from Rattus norvegicus (Rat).